Consider the following 212-residue polypeptide: Ras-related protein Rab-15 (212 aa).

S17, G18, V19, G20, K21, T22, C23, S35, S39, and T40 together coordinate GTP. T22 contacts Mg(2+). Short sequence motifs (switch) lie at residues 31–45 (NEFHSSHISTIGVDF) and 63–80 (DTAGQERYQTITKQYYRR). Mg(2+) is bound by residues T40 and D63. GTP contacts are provided by G66, N121, K122, D124, S151, and A152. Residues C210 and C212 are each lipidated (S-geranylgeranyl cysteine). C212 carries the cysteine methyl ester modification.

It belongs to the small GTPase superfamily. Rab family. In terms of assembly, the GTP bound form of RAB15 interacts with REP15. Interacts (GTP-bound form) with MICAL1, MICAL3, MICALCL, EHBP1 and EHBP1L1. Mg(2+) is required as a cofactor. Expressed predominantly in neural tissues.

Its subcellular location is the cell membrane. The catalysed reaction is GTP + H2O = GDP + phosphate + H(+). With respect to regulation, regulated by guanine nucleotide exchange factors (GEFs) which promote the exchange of bound GDP for free GTP. Regulated by GTPase activating proteins (GAPs) which increase the GTP hydrolysis activity. Inhibited by GDP dissociation inhibitors (GDIs). Functionally, the small GTPases Rab are key regulators of intracellular membrane trafficking, from the formation of transport vesicles to their fusion with membranes. Rabs cycle between an inactive GDP-bound form and an active GTP-bound form that is able to recruit to membranes different sets of downstream effectors directly responsible for vesicle formation, movement, tethering and fusion. RAB15 may act in concert with RAB3A in regulating aspects of synaptic vesicle membrane flow within the nerve terminal. The chain is Ras-related protein Rab-15 from Rattus norvegicus (Rat).